The sequence spans 170 residues: Cathelicidin antimicrobial peptide (170 aa).

Residues methionine 1 to alanine 30 form the signal peptide. Residues glutamine 31–arginine 131 constitute a propeptide, cathelin-like domain (CLD). Disulfide bonds link cysteine 86-cysteine 97 and cysteine 108-cysteine 125. Positions leucine 150–glycine 162 are active core.

Belongs to the cathelicidin family. Monomer, homodimer or homotrimer (in vitro). Oligomerizes as tetra- or hexamer in solution (in vitro). Post-translationally, proteolytically cleaved by proteinase PRTN3 into antibacterial peptide LL-37. Proteolytically cleaved by cathepsin CTSG and neutrophil elastase ELANE. In terms of processing, resistant to proteolytic degradation in solution, and when bound to both zwitterionic (mimicking mammalian membranes) and negatively charged membranes (mimicking bacterial membranes). After secretion onto the skin surface, the CAMP gene product is processed by a serine protease-dependent mechanism into multiple novel antimicrobial peptides distinct from and shorter than cathelicidin LL-37. These peptides show enhanced antimicrobial action, acquiring the ability to kill skin pathogens such as S.aureus, E.coli and C.albicans. These peptides have lost the ability to stimulate CXCL8/IL8 release from keratinocytes. The peptides act synergistically, killing bacteria at lower concentrations when present together, and maintain activity at increased salt condition.

It localises to the secreted. Its subcellular location is the vesicle. Functionally, antimicrobial protein that is an integral component of the innate immune system. Binds to bacterial lipopolysaccharides (LPS). Acts via neutrophil N-formyl peptide receptors to enhance the release of CXCL2. Postsecretory processing generates multiple cathelicidin antimicrobial peptides with various lengths which act as a topical antimicrobial defense in sweat on skin. The unprocessed precursor form, cathelicidin antimicrobial peptide, inhibits the growth of Gram-negative E.coli and E.aerogenes with efficiencies comparable to that of the mature peptide LL-37 (in vitro). Antimicrobial peptide that is an integral component of the innate immune system. Binds to bacterial lipopolysaccharides (LPS). Causes membrane permeabilization by forming transmembrane pores (in vitro). Causes lysis of E.coli. Exhibits antimicrobial activity against Gram-negative bacteria such as P.aeruginosa, S.typhimurium, E.aerogenes, E.coli and P.syringae, Gram-positive bacteria such as L.monocytogenes, S.epidermidis, S.pyogenes and S.aureus, as well as vancomycin-resistant enterococci (in vitro). Exhibits antimicrobial activity against methicillin-resistant S.aureus, P.mirabilis, and C.albicans in low-salt media, but not in media containing 100 mM NaCl (in vitro). Forms chiral supramolecular assemblies with quinolone signal (PQS) molecules of P.aeruginosa, which may lead to interference of bacterial quorum signaling and perturbance of bacterial biofilm formation. May form supramolecular fiber-like assemblies on bacterial membranes. Induces cytokine and chemokine producation as well as TNF/TNFA and CSF2/GMCSF production in normal human keratinocytes. Exhibits hemolytic activity against red blood cells. In terms of biological role, exhibits antimicrobial activity against E.coli and B.megaterium (in vitro). This chain is Cathelicidin antimicrobial peptide, found in Trachypithecus cristatus (Silvered leaf-monkey).